A 396-amino-acid polypeptide reads, in one-letter code: S-arrestin (396 aa).

The protein belongs to the arrestin family.

In terms of biological role, arrestin is one of the major proteins of the ros (retinal rod outer segments); it binds to photoactivated-phosphorylated rhodopsin, thereby apparently preventing the transducin-mediated activation of phosphodiesterase. The polypeptide is S-arrestin (Lithobates pipiens (Northern leopard frog)).